The chain runs to 274 residues: Diaminopimelate epimerase (274 aa).

Asparagine 11, glutamine 44, and asparagine 64 together coordinate substrate. Cysteine 73 functions as the Proton donor in the catalytic mechanism. Substrate is bound by residues 74–75, asparagine 157, asparagine 190, and 208–209; these read GN and ER. Cysteine 217 acts as the Proton acceptor in catalysis. 218-219 lines the substrate pocket; it reads GS.

This sequence belongs to the diaminopimelate epimerase family. Homodimer.

It localises to the cytoplasm. The catalysed reaction is (2S,6S)-2,6-diaminopimelate = meso-2,6-diaminopimelate. The protein operates within amino-acid biosynthesis; L-lysine biosynthesis via DAP pathway; DL-2,6-diaminopimelate from LL-2,6-diaminopimelate: step 1/1. Functionally, catalyzes the stereoinversion of LL-2,6-diaminopimelate (L,L-DAP) to meso-diaminopimelate (meso-DAP), a precursor of L-lysine and an essential component of the bacterial peptidoglycan. This is Diaminopimelate epimerase from Actinobacillus pleuropneumoniae serotype 7 (strain AP76).